A 346-amino-acid polypeptide reads, in one-letter code: Flap endonuclease 1 (346 aa).

Residues 1-102 (MGVTELGKLI…AEIEERRKTR (102 aa)) are N-domain. Asp31, Asp84, Glu156, Glu158, Asp177, Asp179, and Asp239 together coordinate Mg(2+). The I-domain stretch occupies residues 120-261 (DVAKYAKRAV…KALKLIWEFG (142 aa)).

It belongs to the XPG/RAD2 endonuclease family. FEN1 subfamily. In terms of assembly, interacts with PCNA. PCNA stimulates the nuclease activity without altering cleavage specificity. Mg(2+) is required as a cofactor.

Its function is as follows. Structure-specific nuclease with 5'-flap endonuclease and 5'-3' exonuclease activities involved in DNA replication and repair. During DNA replication, cleaves the 5'-overhanging flap structure that is generated by displacement synthesis when DNA polymerase encounters the 5'-end of a downstream Okazaki fragment. Binds the unpaired 3'-DNA end and kinks the DNA to facilitate 5' cleavage specificity. Cleaves one nucleotide into the double-stranded DNA from the junction in flap DNA, leaving a nick for ligation. Also involved in the base excision repair (BER) pathway. Acts as a genome stabilization factor that prevents flaps from equilibrating into structures that lead to duplications and deletions. Also possesses 5'-3' exonuclease activity on nicked or gapped double-stranded DNA. The protein is Flap endonuclease 1 of Pyrobaculum aerophilum (strain ATCC 51768 / DSM 7523 / JCM 9630 / CIP 104966 / NBRC 100827 / IM2).